The following is a 908-amino-acid chain: Pre-mRNA-splicing factor CWC22 homolog (908 aa).

Over residues 1–10 (MKSSVAQIKP) the composition is skewed to polar residues. The segment at 1–129 (MKSSVAQIKP…DELDPLLTRT (129 aa)) is disordered. Over residues 28-56 (SPEDRYEEQERSPRDRDYFDYSRSDYEHS) the composition is skewed to basic and acidic residues. Residues Ser39 and Ser61 each carry the phosphoserine modification. Basic and acidic residues predominate over residues 66–85 (MESRNRDREKRRERERDTDR). Residues 100–110 (ETSVTQSSSAQ) are compositionally biased toward polar residues. Ser107 carries the post-translational modification Phosphoserine. A compositionally biased stretch (basic and acidic residues) spans 113-122 (PATKKKKDEL). The MIF4G domain occupies 163–346 (KKSINGLINK…EVMFAVRKDG (184 aa)). Positions 404 to 443 (EILDEGDTDSNTDQDAGSSEEDEEEEEEEGEEDEEGQKVT) are disordered. The segment covering 407-438 (DEGDTDSNTDQDAGSSEEDEEEEEEEGEEDEE) has biased composition (acidic residues). Residues 454-570 (SFRRTIYLAI…PWSVLECIKL (117 aa)) enclose the MI domain. The disordered stretch occupies residues 654-908 (IVAQKPDVEQ…RREKSPAKQK (255 aa)). Composition is skewed to low complexity over residues 666–680 (SSPSSSSSASSSSES) and 703–714 (SSSISSHSSASA). Residues 726 to 770 (RSKEVDKLIRNQQTNDRKQKERRQEHGHQETRTERERRSEKHRDQ) are compositionally biased toward basic and acidic residues. Ser786 carries the phosphoserine modification. 2 stretches are compositionally biased toward basic and acidic residues: residues 801–817 (ANDRDQEMHIDLENKHG) and 826–908 (RRNS…AKQK). Ser829 is subject to Phosphoserine.

Belongs to the CWC22 family. As to quaternary structure, component of the pre-catalytic spliceosome B and the catalytic spliceosome C complexes. Component of the minor spliceosome, which splices U12-type introns. Interacts with EIF4A3 and PRPF19 in an RNA-independent manner. Direct interaction with EIF4A3 is mediated by the MIF4G domain. Full interaction with EIF4A3 occurs only when EIF4A3 is not part of the EJC and prevents EIF4A3 binding to RNA.

The protein resides in the nucleus. It localises to the nucleus speckle. Its function is as follows. Required for pre-mRNA splicing as component of the spliceosome. As a component of the minor spliceosome, involved in the splicing of U12-type introns in pre-mRNAs. Promotes exon-junction complex (EJC) assembly. Hinders EIF4A3 from non-specifically binding RNA and escorts it to the splicing machinery to promote EJC assembly on mature mRNAs. Through its role in EJC assembly, required for nonsense-mediated mRNA decay. The chain is Pre-mRNA-splicing factor CWC22 homolog (CWC22) from Homo sapiens (Human).